Consider the following 295-residue polypeptide: Ribosomal protein L11 methyltransferase (295 aa).

S-adenosyl-L-methionine contacts are provided by Thr146, Gly167, Asp189, and Asn231.

It belongs to the methyltransferase superfamily. PrmA family.

The protein localises to the cytoplasm. It catalyses the reaction L-lysyl-[protein] + 3 S-adenosyl-L-methionine = N(6),N(6),N(6)-trimethyl-L-lysyl-[protein] + 3 S-adenosyl-L-homocysteine + 3 H(+). In terms of biological role, methylates ribosomal protein L11. The sequence is that of Ribosomal protein L11 methyltransferase from Vibrio parahaemolyticus serotype O3:K6 (strain RIMD 2210633).